Reading from the N-terminus, the 403-residue chain is E2F transcription factor-like E2FE (403 aa).

The DNA-binding element occupies 34–99 (RKQKSLGLLC…RAKNQYTWKG (66 aa)). Residues 128–167 (VKGSDDEDDDEESSQPHSSSQTDSSKPGSLPQSSDPSKID) form a disordered region. Positions 142-152 (QPHSSSQTDSS) are enriched in low complexity. Residues 153–163 (KPGSLPQSSDP) are compositionally biased toward polar residues. A DNA-binding region spans residues 169 to 250 (RREKSLGLLT…SRKPAFKWLG (82 aa)). The interval 282 to 319 (VKRSKSSSSSQENATERRLKMKKHSTPESSYNKSFDVH) is disordered.

This sequence belongs to the E2F/DP family. As to expression, expressed exclusively in mitotically dividing cells. Highly expressed in young leaves and mature flowers. Lower expression in young stalk and in young and mature flowers.

Its subcellular location is the nucleus. Inhibitor of E2F-dependent activation of gene expression. Binds specifically the E2 recognition site without interacting with DP proteins and prevents transcription activation by E2F/DP heterodimers. Controls the timing of endocycle onset and inhibits endoreduplication. This is E2F transcription factor-like E2FE (E2FE) from Arabidopsis thaliana (Mouse-ear cress).